The chain runs to 957 residues: Glycine dehydrogenase (decarboxylating) (957 aa).

At lysine 708 the chain carries N6-(pyridoxal phosphate)lysine.

The protein belongs to the GcvP family. In terms of assembly, the glycine cleavage system is composed of four proteins: P, T, L and H. Pyridoxal 5'-phosphate serves as cofactor.

The enzyme catalyses N(6)-[(R)-lipoyl]-L-lysyl-[glycine-cleavage complex H protein] + glycine + H(+) = N(6)-[(R)-S(8)-aminomethyldihydrolipoyl]-L-lysyl-[glycine-cleavage complex H protein] + CO2. Its function is as follows. The glycine cleavage system catalyzes the degradation of glycine. The P protein binds the alpha-amino group of glycine through its pyridoxal phosphate cofactor; CO(2) is released and the remaining methylamine moiety is then transferred to the lipoamide cofactor of the H protein. In Shigella boydii serotype 18 (strain CDC 3083-94 / BS512), this protein is Glycine dehydrogenase (decarboxylating).